A 296-amino-acid chain; its full sequence is MADSFSLNDALSGSGNPNPQGWPGPWGNQPAGAGGYPGASYPGAYPGQAPPGGYPGQAPPGGYPGQAPPGGYPGQAPPGGYPGQAPPGGYPGQAPPGGYPGQAPPGTYPGPTAPAYPGPTAPGTQPGQPSGPGAYPPPGQPSAPGAYPAAGPFGIPAGPLTVPYDLPLPGGVKPRMLITILGTVRPSANRLALDFKRGNDVAFHFNPRFNEDNKRVIVCNTKLDNIWGKEERQAAFPFESGKPFKIQVLVESDHFKVAVNDAHLLQYNHRMKNLPEISKLGISGDIDLTSASYAMI.

Residues 1–11 show a composition bias toward polar residues; the sequence is MADSFSLNDAL. A disordered region spans residues 1-150; it reads MADSFSLNDA…PSAPGAYPAA (150 aa). Ala-2 is subject to N-acetylalanine. Ser-6 and Ser-12 each carry phosphoserine; by CK1. Composition is skewed to low complexity over residues 12 to 31 and 38 to 47; these read SGSGNPNPQGWPGPWGNQPA and GASYPGAYPG. A run of 8 repeats spans residues 36–44, 45–53, 54–62, 63–71, 72–80, 81–89, 90–98, and 99–107. The interval 36–143 is 12 X 9 AA tandem repeats of Y-P-G-X(3)-P-G-[GAT]; sequence YPGASYPGAY…AYPPPGQPSA (108 aa). Residues 48 to 120 show a composition bias toward pro residues; that stretch reads QAPPGGYPGQ…PTAPAYPGPT (73 aa). One copy of the 9; approximate repeat lies at 108-115; the sequence is YPGPTAPA. Residues 116–124 form repeat 10; the sequence is YPGPTAPGT. A compositionally biased stretch (low complexity) spans 121–133; sequence APGTQPGQPSGPG. Residues 125–134 form an 11; approximate repeat; it reads QPGQPSGPGA. Residues 135 to 143 form a 12; approximate repeat; that stretch reads YPPPGQPSA. Residues 164 to 294 enclose the Galectin domain; that stretch reads YDLPLPGGVK…DIDLTSASYA (131 aa). 227–233 contributes to the a beta-D-galactoside binding site; sequence WGKEERQ. The Nuclear export signal motif lies at 272-287; that stretch reads KNLPEISKLGISGDID.

In terms of assembly, probably forms homo- or heterodimers. Interacts with DMBT1. Interacts with CD6 and ALCAM. Forms a complex with the ITGA3, ITGB1 and CSPG4. Interacts with LGALS3BP, LYPD3, ZFTRAF1 and UACA. Interacts with TRIM16; this interaction mediates autophagy of damage endomembranes. Interacts with cargo receptor TMED10; the interaction mediates the translocation from the cytoplasm into the ERGIC (endoplasmic reticulum-Golgi intermediate compartment) and thereby secretion. Interacts with and inhibits by binding NCR3/NKp30. In terms of processing, the degree of phosphorylation is higher in the cytoplasmic form than in the nuclear form. In protein isolated from a canine kidney cell line, 90% of the phosphate was on Ser-6 and 10% was on Ser-12.

It localises to the cytoplasm. The protein localises to the nucleus. It is found in the secreted. Functionally, galactose-specific lectin which binds IgE. May mediate with the alpha-3, beta-1 integrin the stimulation by CSPG4 of endothelial cells migration. Together with DMBT1, required for terminal differentiation of columnar epithelial cells during early embryogenesis. In the nucleus: acts as a pre-mRNA splicing factor. Involved in acute inflammatory responses including neutrophil activation and adhesion, chemoattraction of monocytes macrophages, opsonization of apoptotic neutrophils, and activation of mast cells. Together with TRIM16, coordinates the recognition of membrane damage with mobilization of the core autophagy regulators ATG16L1 and BECN1 in response to damaged endomembranes. When secreted, interacts with NK cell-activating receptor NCR3/NKp30 acting as an inhibitory ligand which antagonizes NK cell attack. The sequence is that of Galectin-3 (LGALS3) from Canis lupus familiaris (Dog).